The primary structure comprises 121 residues: uncharacterized protein (121 aa).

The segment at 20-98 (NEVRTSQSEV…PYYHGSKAST (79 aa)) is disordered. The span at 35-51 (KKSDNGEKDEKEEKELN) shows a compositional bias: basic and acidic residues.

This is an uncharacterized protein from Invertebrate iridescent virus 6 (IIV-6).